Reading from the N-terminus, the 205-residue chain is Thymidylate kinase (205 aa).

Gly9–Thr16 is an ATP binding site.

The protein belongs to the thymidylate kinase family.

It carries out the reaction dTMP + ATP = dTDP + ADP. In terms of biological role, phosphorylation of dTMP to form dTDP in both de novo and salvage pathways of dTTP synthesis. This chain is Thymidylate kinase, found in Staphylococcus aureus (strain NCTC 8325 / PS 47).